Here is a 110-residue protein sequence, read N- to C-terminus: UPF0060 membrane protein Dtpsy_1668 (110 aa).

4 helical membrane passes run 7 to 27 (LALF…PWLW), 33 to 53 (SAWL…LLTL), 63 to 83 (AAYG…VDGV), and 86 to 106 (GPWD…IAFA).

This sequence belongs to the UPF0060 family.

It is found in the cell inner membrane. This chain is UPF0060 membrane protein Dtpsy_1668, found in Acidovorax ebreus (strain TPSY) (Diaphorobacter sp. (strain TPSY)).